Here is a 925-residue protein sequence, read N- to C-terminus: MDMFPLTWIFLALYFSGHKVRSQQDPPCGGRLNSKDAGYITSPGYPQDYPSHQNCEWVVYAPEPNQKIVLNFNPHFEIEKHDCKYDFIEIRDGDSESADLLGKHCGNIAPPTIISSGSVLYIKFTSDYARQGAGFSLRYEIFKTGSEDCSKNFTSPNGTIESPGFPEKYPHNLDCTFTILAKPRMEIILQFLTFDLEHDPLQVGEGDCKYDWLDIWDGIPHVGPLIGKYCGTKTPSKLRSSTGILSLTFHTDMAVAKDGFSARYYLVHQEPPENFQCNAPLGMESGRIANEQISASSTFSDGRWTPQQSRLHGDDNGWTPNVDSNKEYLQVDLRFLTMLTAIATQGAISRETQKGYYVKSYKLEVSTNGEDWMVYRHGKNHKVFQANNDATELVLNKLHTPLLTRFIRIRPQTWHLGIALRLELFGCRVTDAPCSNMLGMLSGLIADTQISASSTREYLWSPSAARLVSSRSGWFPRNPQAQPGEEWLQVDLGTPKTVKGVIIQGARGGDSITAMEARAFVRKFKVSYSLNGKDWEYIQDPRTQQPKLFEGNMHYDTPDIRRFEPVPAQYVRVYPERWSPAGIGMRLEVLGCDWTDSKPTVETLGPTVKSEETTTPYPMDEDATECGENCSFEDDKDLQLPSGFNCNFDFPEETCGWMYDRAKWLQSTWISSANPNDRTFPDDKNFLKLQSDGGREGQFGRLISPPVHLPRSPVCMEFQYQAMGGHGVALQVVREARQESKLLWVIREDQGSEWKHGRIILPSYDMEYQIVFEGVIGKGRSGEISIDDIRISTDVPLENCMEPISAFAVDIPEIHGGEGYEDEIDDDYEGDWNNSSSTSGAGSPSSGKEKSWLYTLDPILITIIAMSSLGVLLGATCAGLLLYCTCSYSGLSSRSCTTLENYNFELYDGLKHKVKINHQKCCSEA.

The signal sequence occupies residues 1–22 (MDMFPLTWIFLALYFSGHKVRS). Residues 23-858 (QQDPPCGGRL…EKSWLYTLDP (836 aa)) lie on the Extracellular side of the membrane. 3 cysteine pairs are disulfide-bonded: C28–C55, C83–C105, and C149–C175. 2 CUB domains span residues 28–142 (CGGR…YEIF) and 149–267 (CSKN…YYLV). N-linked (GlcNAc...) asparagine glycosylation is found at N152 and N157. The Ca(2+) site is built by E197, D211, and D252. C208 and C230 are joined by a disulfide. Cystine bridges form between C277–C427 and C434–C592. 2 F5/8 type C domains span residues 277 to 427 (CNAP…LFGC) and 434 to 592 (CSNM…VLGC). Residues 297-310 (STFSDGRWTPQQSR) are compositionally biased toward polar residues. The interval 297–317 (STFSDGRWTPQQSRLHGDDNG) is disordered. The tract at residues 601–621 (VETLGPTVKSEETTTPYPMDE) is disordered. N629 carries an N-linked (GlcNAc...) asparagine glycan. Residues 642 to 802 (SGFNCNFDFP…TDVPLENCME (161 aa)) form the MAM domain. Positions 820–830 (YEDEIDDDYEG) are enriched in acidic residues. The interval 820–849 (YEDEIDDDYEGDWNNSSSTSGAGSPSSGKE) is disordered. N-linked (GlcNAc...) asparagine glycans are attached at residues N833 and N834. Over residues 835 to 846 (SSSTSGAGSPSS) the composition is skewed to low complexity. A helical transmembrane segment spans residues 859 to 883 (ILITIIAMSSLGVLLGATCAGLLLY). Over 884–925 (CTCSYSGLSSRSCTTLENYNFELYDGLKHKVKINHQKCCSEA) the chain is Cytoplasmic.

This sequence belongs to the neuropilin family. Heterodimer with NRP1. Binds PLXNB1. Found in certain neuronal populations of the CNS, including dorsal root ganglia, and in other non-neuronal tissues including mesenchymal tissue lining in the ribs.

It localises to the membrane. High affinity receptor for semaphorins 3C, 3F, VEGF-165 and VEGF-145 isoforms of VEGF, and the PLGF-2 isoform of PGF. The sequence is that of Neuropilin-2 (Nrp2) from Rattus norvegicus (Rat).